A 154-amino-acid chain; its full sequence is 6,7-dimethyl-8-ribityllumazine synthase (154 aa).

Residues F22, 56–58 (SFE), and 81–83 (VLI) contribute to the 5-amino-6-(D-ribitylamino)uracil site. 86–87 (ET) is a (2S)-2-hydroxy-3-oxobutyl phosphate binding site. The active-site Proton donor is H89. A 5-amino-6-(D-ribitylamino)uracil-binding site is contributed by F114. Residue R128 coordinates (2S)-2-hydroxy-3-oxobutyl phosphate.

Belongs to the DMRL synthase family.

It carries out the reaction (2S)-2-hydroxy-3-oxobutyl phosphate + 5-amino-6-(D-ribitylamino)uracil = 6,7-dimethyl-8-(1-D-ribityl)lumazine + phosphate + 2 H2O + H(+). It participates in cofactor biosynthesis; riboflavin biosynthesis; riboflavin from 2-hydroxy-3-oxobutyl phosphate and 5-amino-6-(D-ribitylamino)uracil: step 1/2. Functionally, catalyzes the formation of 6,7-dimethyl-8-ribityllumazine by condensation of 5-amino-6-(D-ribitylamino)uracil with 3,4-dihydroxy-2-butanone 4-phosphate. This is the penultimate step in the biosynthesis of riboflavin. This is 6,7-dimethyl-8-ribityllumazine synthase from Chlamydia felis (strain Fe/C-56) (Chlamydophila felis).